A 347-amino-acid chain; its full sequence is MRPAILAAFSTLPAAAKATYPFAPETFDGSYKDIGLPTIYDLSATQSTNYNGSWATGSWITSVSGGQYFVVSHYVNDGIHDVYRSSILDLSSLKYRYFFQAGNGSYTASPPSHLKAGVGKGNGFEGISNDNYTTMRVQSSHPNVTFDLTYHATTKPLINGGAGVVMLGASESKQWSLPACWTNGFLIVGDEQIPIDPKRSLTWYDRQWGTGGLTNWTWYGLHIPKTGHVLSIWTGDTDADRAAPITPVRFATVRNAYGAQTVCNITWIPDLSHIFHSDSTNKSYPLAWTVEIPSYDAIIKVKSRTENQLNTGSHGSEPEAYNGFVTFAGQFQGTETEGFGIVEIVYL.

An N-terminal signal peptide occupies residues 1–18 (MRPAILAAFSTLPAAAKA). 7 N-linked (GlcNAc...) asparagine glycosylation sites follow: N51, N103, N131, N143, N215, N264, and N281.

The enzyme catalyses [(1'E)-5'-(3',3'-dimethyloxiran-2'-yl)-3'-hydroxy-3'-methylpent-1'-en-1'-yl]-quinolinone B = (1'E,3'E)-5-(3,3-dimethyloxiran-2-yl)-3-methylhexa-1,3-dienyl-quinolinone B + H2O. It functions in the pathway secondary metabolite biosynthesis. It participates in alkaloid biosynthesis. The protein operates within mycotoxin biosynthesis. Functionally, dehydratase; part of the gene cluster that mediates the biosynthesis of the aspoquinolone mycotoxins. Within the pathway, the dehydratase asqC catalyzes the dehydratation of the epoxide at C-3 to produce (1'E,3'E)-5-(3,3-dimethyloxiran-2-yl)-3-methylhexa-1,3-dienyl-quinolinone B. The first step of the pathway is catalyzed by the nonribosomal peptide synthetase asqK that condenses anthranilic acid and O-methyl-L-tyrosine to produce 4'-methoxycyclopeptin. 4'-methoxycyclopeptin is then converted to 4'-methoxydehydrocyclopeptin by the ketoglutarate-dependent dioxygenase asqJ. AsqJ also converts its first product 4'-methoxydehydrocyclopeptin to 4'-methoxycyclopenin. The following conversion of 4'-methoxycyclopenin into 4'-methoxyviridicatin is catalyzed by the cyclopenase asqI. 4'-methoxyviridicatin is the precursor of quinolone natural products, and is further converted to quinolinone B. The prenyltransferase asqH1 then catalyzes the canonical Friedel-Crafts alkylation of quinolinone B with dimethylallyl cation to yield dimethylallyl quinolone, which is subjected to FAD-dependent dehydrogenation by the FAD-linked oxidoreductase asqF to yield conjugated aryl diene. The delta(3') double bond then serves as the site of the second alkylation with DMAPP catalyzed by the prenyltransferase asqH2 to yield a carbenium ion intermediate, which can be attacked by H(2)O to yield a styrenyl quinolone containing a C3'-hydroxyprenyl chain. The FAD-dependent monooxygenase asqG performs epoxidation of the terminal C7'-C8' olefin. Finally, after dehydratation of the epoxide at C3 by asqC, the quinolone epoxide rearrangement protein asqO catalyzes an enzymatic 3-exo-tet cyclization to yield the cyclopropyl-THF ring system in aspoquinolone. The chain is Dehydratase asqC from Emericella nidulans (strain FGSC A4 / ATCC 38163 / CBS 112.46 / NRRL 194 / M139) (Aspergillus nidulans).